The sequence spans 342 residues: GTPase Obg (342 aa).

An Obg domain is found at 1–159 (MKFLDLCKVY…RTIWLRLKLI (159 aa)). The OBG-type G domain occupies 160-327 (ADAGLLGLPN…VLRALWAEID (168 aa)). Residues 166–173 (GLPNAGKS), 191–195 (FTTLV), 212–215 (DIPG), 279–282 (NKID), and 308–310 (SGV) each bind GTP. Residues Ser-173 and Thr-193 each contribute to the Mg(2+) site.

It belongs to the TRAFAC class OBG-HflX-like GTPase superfamily. OBG GTPase family. In terms of assembly, monomer. Mg(2+) serves as cofactor.

The protein localises to the cytoplasm. An essential GTPase which binds GTP, GDP and possibly (p)ppGpp with moderate affinity, with high nucleotide exchange rates and a fairly low GTP hydrolysis rate. Plays a role in control of the cell cycle, stress response, ribosome biogenesis and in those bacteria that undergo differentiation, in morphogenesis control. The chain is GTPase Obg from Cereibacter sphaeroides (strain ATCC 17029 / ATH 2.4.9) (Rhodobacter sphaeroides).